The chain runs to 265 residues: Palmitoyltransferase ZDHHC21 (265 aa).

Residues M1–C16 lie on the Cytoplasmic side of the membrane. The chain crosses the membrane as a helical span at residues M17–F37. Over P38 to H44 the chain is Extracellular. A helical membrane pass occupies residues I45–V65. The Cytoplasmic portion of the chain corresponds to R66–W133. The DHHC domain occupies E90 to F140. The active-site S-palmitoyl cysteine intermediate is the C120. Residues L134–F154 form a helical membrane-spanning segment. Residues C155–F185 are Extracellular-facing. A helical transmembrane segment spans residues M186 to I206. Residues T207–V265 are Cytoplasmic-facing.

This sequence belongs to the DHHC palmitoyltransferase family. Widely expressed. Expressed in Henle's layer within the hair bulb and the hair shaft cuticle (at protein level). Expression is limited to the post-mitotic lineages of inner root sheath (IRS) and cuticle.

The protein resides in the golgi apparatus membrane. It is found in the golgi apparatus. It localises to the cis-Golgi network membrane. Its subcellular location is the cell membrane. It catalyses the reaction L-cysteinyl-[protein] + hexadecanoyl-CoA = S-hexadecanoyl-L-cysteinyl-[protein] + CoA. In terms of biological role, palmitoyltransferase that catalyzes the addition of palmitate onto various protein substrates. Palmitoylates sex steroid hormone receptors, including ESR1, PGR and AR, thereby regulating their targeting to the plasma membrane. This affects rapid intracellular signaling by sex hormones via ERK and AKT kinases and the generation of cAMP, but does not affect that mediated by their nuclear receptor. Palmitoylates FYN, regulates its localization in hair follicles and plays a key role in epidermal homeostasis and hair follicle differentiation. Through the palmitoylation of PLCB1 and the regulation of PLCB1 downstream signaling may indirectly regulate the function of the endothelial barrier and the adhesion of leukocytes to the endothelium. Also has a palmitoyltransferase activity toward ADRA1D, positively regulating its activity and expression and may thereby play a role in vascular contraction. May also palmitoylate eNOS and LCK. In Mus musculus (Mouse), this protein is Palmitoyltransferase ZDHHC21.